Consider the following 274-residue polypeptide: Thiamine kinase (274 aa).

It belongs to the thiamine kinase family.

It catalyses the reaction thiamine + ATP = thiamine phosphate + ADP + H(+). It functions in the pathway cofactor biosynthesis; thiamine diphosphate biosynthesis; thiamine phosphate from thiamine: step 1/1. In terms of biological role, catalyzes the ATP-dependent phosphorylation of thiamine to thiamine phosphate. Is involved in thiamine salvage. In Shigella dysenteriae serotype 1 (strain Sd197), this protein is Thiamine kinase.